The primary structure comprises 247 residues: UPF0259 membrane protein BU276 (247 aa).

6 helical membrane passes run 20 to 40 (IGAIFFISIFATFMNILIDMF), 85 to 105 (IMESLISKTTLLGSIIILISV), 114 to 134 (IVSSIRTFFLFFPSLFILNFL), 137 to 157 (FIIQIGFMLLIIPGILLSIIL), 188 to 208 (IIGPGVLFWMCGKFILTMLLA), and 218 to 238 (LFLISNISMNILFSILIIYLF).

It belongs to the UPF0259 family.

The protein resides in the cell membrane. This chain is UPF0259 membrane protein BU276, found in Buchnera aphidicola subsp. Acyrthosiphon pisum (strain APS) (Acyrthosiphon pisum symbiotic bacterium).